We begin with the raw amino-acid sequence, 85 residues long: Small ribosomal subunit protein bS20 (85 aa).

Residues 1 to 22 (MANIKSAIKRAKLSEERRAHNA) are disordered.

This sequence belongs to the bacterial ribosomal protein bS20 family.

Its function is as follows. Binds directly to 16S ribosomal RNA. The protein is Small ribosomal subunit protein bS20 of Bacillus cytotoxicus (strain DSM 22905 / CIP 110041 / 391-98 / NVH 391-98).